The chain runs to 514 residues: LWamide neuropeptides (514 aa).

The first 22 residues, 1 to 22, serve as a signal peptide directing secretion; it reads MALKCHLVLLAITLLLAQCSGS. The span at 23–53 shows a compositional bias: basic and acidic residues; that stretch reads VDKKDSTTNHLDEKKTDSTEAHIVQETDALK. Positions 23–75 are excised as a propeptide; the sequence is VDKKDSTTNHLDEKKTDSTEAHIVQETDALKENSYLGAEEESKEEDKKRSAAP. Residues 23 to 180 form a disordered region; it reads VDKKDSTTNH…PGLWGRSADA (158 aa). 2 positions are modified to tryptophan amide: tryptophan 81 and tryptophan 90. Residues 93 to 97 constitute a propeptide that is removed on maturation; sequence SADAG. Tryptophan amide occurs at positions 102 and 111. A propeptide spanning residues 114–118 is cleaved from the precursor; the sequence is SADAG. 2 positions are modified to tryptophan amide: tryptophan 123 and tryptophan 132. The propeptide occupies 135 to 139; it reads SADAG. Tryptophan amide occurs at positions 144 and 153. The propeptide occupies 156–160; that stretch reads SADAG. A tryptophan amide mark is found at tryptophan 165 and tryptophan 174. Residues 177 to 181 constitute a propeptide that is removed on maturation; it reads SADAR. The residue at position 186 (tryptophan 186) is a Tryptophan amide. A propeptide spanning residues 190–199 is cleaved from the precursor; sequence EIYALWGGKR. Tryptophan 205 bears the Tryptophan amide mark. A propeptide spanning residues 208 to 212 is cleaved from the precursor; that stretch reads SADPG. Tryptophan amide is present on tryptophan 217. Residues 221 to 230 constitute a propeptide that is removed on maturation; the sequence is ELVGLWGGKR. At tryptophan 236 the chain carries Tryptophan amide. The propeptide occupies 239 to 243; it reads SAEAG. Tryptophan amide is present on residues tryptophan 248 and tryptophan 257. Residues 258–475 form a disordered region; it reads GRSADPLQPG…GRSAGSGQLG (218 aa). A propeptide spanning residues 260–264 is cleaved from the precursor; it reads SADPL. Tryptophan amide is present on residues tryptophan 269 and tryptophan 278. Positions 281 to 284 are excised as a propeptide; the sequence is SADP. Tryptophan amide is present on residues tryptophan 290 and tryptophan 299. Positions 302–305 are excised as a propeptide; sequence SADP. Tryptophan amide is present on residues tryptophan 311 and tryptophan 320. The propeptide occupies 323-326; it reads SADP. Residues tryptophan 332 and tryptophan 341 each carry the tryptophan amide modification. Positions 344–347 are excised as a propeptide; sequence SADP. Tryptophan amide is present on tryptophan 353. Positions 356-366 are excised as a propeptide; sequence SPGLWGRSADP. At tryptophan 372 the chain carries Tryptophan amide. Residues 376–387 constitute a propeptide that is removed on maturation; the sequence is QNPGFWGRSADP. 2 positions are modified to tryptophan amide: tryptophan 393 and tryptophan 402. Positions 405-408 are excised as a propeptide; it reads SADP. A tryptophan amide mark is found at tryptophan 414 and tryptophan 423. A propeptide spanning residues 426-429 is cleaved from the precursor; sequence SADP. Residues tryptophan 435 and tryptophan 444 each carry the tryptophan amide modification. Positions 447 to 450 are excised as a propeptide; the sequence is SADP. Tryptophan 456 and tryptophan 465 each carry tryptophan amide. The propeptide occupies 468–472; that stretch reads SAGSG. 2 positions are modified to tryptophan amide: tryptophan 477 and tryptophan 487. Residues 489-514 are disordered; the sequence is RSAEPPQFEDLEDLKKKSAIPQPKGQ. Residues 490–514 constitute a propeptide that is removed on maturation; the sequence is SAEPPQFEDLEDLKKKSAIPQPKGQ.

Belongs to the LWamide neuropeptide family.

The protein localises to the secreted. Functionally, metamorphosin A may be part of an internal signaling system involved in control of metamorphosis. This chain is LWamide neuropeptides, found in Anthopleura elegantissima (Green aggregating anemone).